The sequence spans 250 residues: Functional amyloid subunit FapC (250 aa).

A signal peptide spans 1 to 24; it reads MKPTMALKPLVFALAALMAVAAQA. A FapC_R1 repeat occupies 62–95; sequence NNAGANGSLSNSKGNLGANIAAGSGNQQDNAAAI. The linker 1 stretch occupies residues 96–126; the sequence is TSSAGDAATVFAVADIYQESKDNKFTNKGTQ. One copy of the FapC_R2 repeat lies at 127-160; sequence NNALLNNSANNSSGNVGVNVAAGQGNQQKNNLAI. The tract at residues 161–199 is linker 2; sequence VTADGKNVAAASNTEQVSLDNHFLNEASSKHSYKPQYVV. The stretch at 200-233 is one FapC_R3 repeat; that stretch reads NNAGLLNSANNASGNIGVNVAAGAGNQQSNTLTL. Positions 237 to 240 match the Cys-X-X-Cys motif; that stretch reads CTVC.

The protein belongs to the FapB/FapC family. The major component of purified amyloid fibrils. Forms fibrils in vitro; in the presence of FapA the fibrils are about 50% wider. Interacts with FapA. Fibrillates in vitro; this is inhibited by FapA. Fibrils are resistant to boiling in 2% (weight/vol) SDS and require &gt;90% (vol/vol) formic acid to dissolve.

The protein localises to the fimbrium. The protein resides in the secreted. Functionally, the major functional amyloid subunit in this bacterium. Intrinsically disordered in its monomeric state. Upon overexpression of the endogenous six-gene locus (fapA-fapF) in situ, cells form large clumps during liquid growth, make large amounts of biofilm and produce amyloid fibrils. Expression of the 6 gene operon in E.coli strain BL21(DE3) induces flocculation and biofilm formation with copious extracellular fibrils. This is Functional amyloid subunit FapC from Pseudomonas fluorescens.